We begin with the raw amino-acid sequence, 514 residues long: Probable outer membrane protein pmp12 (514 aa).

The first 21 residues, 1–21, serve as a signal peptide directing secretion; sequence MTILRNFLTCSALFLALPAAA.

It belongs to the PMP outer membrane protein family.

It localises to the secreted. It is found in the cell wall. The protein localises to the cell outer membrane. The protein is Probable outer membrane protein pmp12 (pmp12) of Chlamydia pneumoniae (Chlamydophila pneumoniae).